Reading from the N-terminus, the 790-residue chain is DNA topoisomerase 1 (790 aa).

Composition is skewed to polar residues over residues Met1–Met18, Lys44–Ser54, and Ser61–Thr70. A disordered region spans residues Met1–Val196. Residues Gln158–Pro167 are compositionally biased toward acidic residues. Polar residues predominate over residues Ser168–Ser181. Interaction with DNA stretches follow at residues Lys426–Tyr427, Arg490–Lys495, and Thr581–Lys583. The 358-residue stretch at Ser433–Phe790 folds into the Topo IB-type catalytic domain. Residue Tyr749 is the O-(3'-phospho-DNA)-tyrosine intermediate of the active site.

It belongs to the type IB topoisomerase family.

The protein localises to the nucleus. It carries out the reaction ATP-independent breakage of single-stranded DNA, followed by passage and rejoining.. Functionally, releases the supercoiling and torsional tension of DNA introduced during the DNA replication and transcription by transiently cleaving and rejoining one strand of the DNA duplex. Introduces a single-strand break via transesterification at a target site in duplex DNA. The scissile phosphodiester is attacked by the catalytic tyrosine of the enzyme, resulting in the formation of a DNA-(3'-phosphotyrosyl)-enzyme intermediate and the expulsion of a 5'-OH DNA strand. The free DNA strand then rotates around the intact phosphodiester bond on the opposing strand, thus removing DNA supercoils. Finally, in the religation step, the DNA 5'-OH attacks the covalent intermediate to expel the active-site tyrosine and restore the DNA phosphodiester backbone. This chain is DNA topoisomerase 1 (TOP1), found in Daucus carota (Wild carrot).